Reading from the N-terminus, the 265-residue chain is Chalcone synthase (265 aa).

Residue C40 is part of the active site.

It belongs to the thiolase-like superfamily. Chalcone/stilbene synthases family.

The catalysed reaction is (E)-4-coumaroyl-CoA + 3 malonyl-CoA + 3 H(+) = 2',4,4',6'-tetrahydroxychalcone + 3 CO2 + 4 CoA. It functions in the pathway secondary metabolite biosynthesis; flavonoid biosynthesis. Functionally, the primary product of this enzyme is 4,2',4',6'-tetrahydroxychalcone (also termed naringenin-chalcone or chalcone) which can under specific conditions spontaneously isomerize into naringenin. In Medicago sativa (Alfalfa), this protein is Chalcone synthase (CHSII).